Reading from the N-terminus, the 299-residue chain is NAD-dependent protein deacetylase 1 (299 aa).

Residues 15–292 (LPPGTTDLAP…TTVADRLGLR (278 aa)) enclose the Deacetylase sirtuin-type domain. Residues 39 to 59 (GAGISTESGIPDYRGEGGSLS) and 117 to 120 (QNVD) contribute to the NAD(+) site. The active-site Proton acceptor is H135. Zn(2+)-binding residues include C143, C146, C194, and C197. NAD(+) is bound by residues 234 to 236 (GSS) and L278.

The protein belongs to the sirtuin family. Class II subfamily. Requires Zn(2+) as cofactor.

It is found in the cytoplasm. The enzyme catalyses N(6)-acetyl-L-lysyl-[protein] + NAD(+) + H2O = 2''-O-acetyl-ADP-D-ribose + nicotinamide + L-lysyl-[protein]. Functionally, NAD-dependent protein deacetylase which modulates the activities of several enzymes which are inactive in their acetylated form. This is NAD-dependent protein deacetylase 1 from Streptomyces coelicolor (strain ATCC BAA-471 / A3(2) / M145).